Consider the following 220-residue polypeptide: Probable nicotinate-nucleotide adenylyltransferase (220 aa).

This sequence belongs to the NadD family.

It carries out the reaction nicotinate beta-D-ribonucleotide + ATP + H(+) = deamido-NAD(+) + diphosphate. The protein operates within cofactor biosynthesis; NAD(+) biosynthesis; deamido-NAD(+) from nicotinate D-ribonucleotide: step 1/1. Catalyzes the reversible adenylation of nicotinate mononucleotide (NaMN) to nicotinic acid adenine dinucleotide (NaAD). This chain is Probable nicotinate-nucleotide adenylyltransferase, found in Yersinia pseudotuberculosis serotype O:1b (strain IP 31758).